The sequence spans 418 residues: 3-phosphoshikimate 1-carboxyvinyltransferase (418 aa).

Lysine 26, serine 27, and arginine 31 together coordinate 3-phosphoshikimate. Lysine 26 contacts phosphoenolpyruvate. Phosphoenolpyruvate-binding residues include glycine 97 and arginine 125. Residues serine 170, serine 171, glutamine 172, aspartate 297, asparagine 320, and lysine 324 each coordinate 3-phosphoshikimate. Residue glutamine 172 coordinates phosphoenolpyruvate. The active-site Proton acceptor is the aspartate 297. The phosphoenolpyruvate site is built by arginine 328, arginine 375, and lysine 400.

It belongs to the EPSP synthase family. Monomer.

The protein resides in the cytoplasm. It carries out the reaction 3-phosphoshikimate + phosphoenolpyruvate = 5-O-(1-carboxyvinyl)-3-phosphoshikimate + phosphate. It functions in the pathway metabolic intermediate biosynthesis; chorismate biosynthesis; chorismate from D-erythrose 4-phosphate and phosphoenolpyruvate: step 6/7. In terms of biological role, catalyzes the transfer of the enolpyruvyl moiety of phosphoenolpyruvate (PEP) to the 5-hydroxyl of shikimate-3-phosphate (S3P) to produce enolpyruvyl shikimate-3-phosphate and inorganic phosphate. In Pseudomonas syringae pv. syringae (strain B728a), this protein is 3-phosphoshikimate 1-carboxyvinyltransferase.